Here is a 434-residue protein sequence, read N- to C-terminus: Histidinol dehydrogenase (434 aa).

Residues Y130, Q188, and N211 each coordinate NAD(+). Substrate contacts are provided by S237, Q259, and H262. Positions 259 and 262 each coordinate Zn(2+). Residues E326 and H327 each act as proton acceptor in the active site. 4 residues coordinate substrate: H327, D360, E414, and H419. D360 provides a ligand contact to Zn(2+). H419 is a Zn(2+) binding site.

Belongs to the histidinol dehydrogenase family. Homodimer. Zn(2+) serves as cofactor. Requires Mn(2+) as cofactor.

The catalysed reaction is L-histidinol + 2 NAD(+) + H2O = L-histidine + 2 NADH + 3 H(+). The protein operates within amino-acid biosynthesis; L-histidine biosynthesis; L-histidine from 5-phospho-alpha-D-ribose 1-diphosphate: step 9/9. With respect to regulation, activity is lost when the metal is removed through urea denaturation or chelation, and can be regained by addition of metal. In terms of biological role, catalyzes the sequential NAD-dependent oxidations of L-histidinol to L-histidinaldehyde and then to L-histidine. The protein is Histidinol dehydrogenase (hisD) of Salmonella typhimurium (strain LT2 / SGSC1412 / ATCC 700720).